Reading from the N-terminus, the 1442-residue chain is Chitin synthase regulator SKT5 (1442 aa).

2 disordered regions span residues 1 to 54 (MTHP…SPTL) and 72 to 117 (LALK…RHLQ). A compositionally biased stretch (basic and acidic residues) spans 12 to 25 (NGKEPEKEEPRCVH). Residues 39–53 (KSSSAITNENVSSPT) show a composition bias toward polar residues. The segment covering 75–99 (KEPENGKNKHPDSEQDDGDMKEQRS) has biased composition (basic and acidic residues). 7 Sel1-like repeats span residues 198 to 236 (VESQ…KRGH), 237 to 272 (PDAA…SRKH), 273 to 309 (PGAQ…ENAT), 313 to 350 (PHAL…EMGY), 351 to 387 (APSA…QQNH), 388 to 425 (KEAC…EQGL), and 426 to 461 (AKAE…EHGD). The tract at residues 550 to 1402 (EKPKTATPTS…FSTPDSSSSK (853 aa)) is disordered. The span at 605–617 (PKPPTPPPPPPPE) shows a compositional bias: pro residues. A compositionally biased stretch (basic residues) spans 633 to 648 (FKSRLLRLGKMGKIRK). Residues 747–758 (GPSSAAGADGAP) show a composition bias toward low complexity. Basic and acidic residues-rich tracts occupy residues 762 to 804 (GEPK…KSEK), 821 to 840 (GSDK…KPSD), and 859 to 875 (RPDE…KDSE). Positions 876–891 (STSPSSPKPTTGSAEP) are enriched in low complexity. Pro residues-rich tracts occupy residues 964–977 (PFPP…PPNA), 1139–1158 (RPGP…PSRP), and 1200–1220 (AMQP…PTGP). A compositionally biased stretch (polar residues) spans 1232 to 1243 (PSQSSMHQSGNG). Residues 1271 to 1282 (PRPPRPTSPPPF) are compositionally biased toward pro residues. Positions 1295-1305 (RGVMPPGSGPS) are enriched in low complexity. Pro residues-rich tracts occupy residues 1306–1322 (MRPP…PRSP) and 1371–1386 (DRPP…PPKT). Residues 1392–1402 (GFSTPDSSSSK) show a composition bias toward polar residues.

Belongs to the SKT5 family.

The protein resides in the cell membrane. Functionally, activator of the chitin synthase CHS3 which polymerizes chitin, a structural polymer of the fungal cell wall. This is Chitin synthase regulator SKT5 from Malassezia restricta (strain ATCC 96810 / NBRC 103918 / CBS 7877) (Seborrheic dermatitis infection agent).